Here is a 419-residue protein sequence, read N- to C-terminus: UDP-N-acetylglucosamine 1-carboxyvinyltransferase (419 aa).

22 to 23 (KN) serves as a coordination point for phosphoenolpyruvate. Residue Arg95 coordinates UDP-N-acetyl-alpha-D-glucosamine. The active-site Proton donor is the Cys119. Cys119 carries the 2-(S-cysteinyl)pyruvic acid O-phosphothioketal modification. Residues 164–167 (KVSV), Asp308, and Ile330 contribute to the UDP-N-acetyl-alpha-D-glucosamine site.

It belongs to the EPSP synthase family. MurA subfamily.

Its subcellular location is the cytoplasm. The catalysed reaction is phosphoenolpyruvate + UDP-N-acetyl-alpha-D-glucosamine = UDP-N-acetyl-3-O-(1-carboxyvinyl)-alpha-D-glucosamine + phosphate. Its pathway is cell wall biogenesis; peptidoglycan biosynthesis. Functionally, cell wall formation. Adds enolpyruvyl to UDP-N-acetylglucosamine. In Rickettsia peacockii (strain Rustic), this protein is UDP-N-acetylglucosamine 1-carboxyvinyltransferase.